A 117-amino-acid polypeptide reads, in one-letter code: Ig heavy chain V region MOPC 173 (117 aa).

In terms of domain architecture, Ig-like spans 1–116; that stretch reads EVKLLESGGP…WGQGTSVTVS (116 aa). A disulfide bridge links cysteine 22 with cysteine 96.

This chain is Ig heavy chain V region MOPC 173, found in Mus musculus (Mouse).